Here is a 196-residue protein sequence, read N- to C-terminus: 7-methyl-GTP pyrophosphatase (196 aa).

Aspartate 72 (proton acceptor) is an active-site residue.

The protein belongs to the Maf family. YceF subfamily. A divalent metal cation is required as a cofactor.

The protein resides in the cytoplasm. It catalyses the reaction N(7)-methyl-GTP + H2O = N(7)-methyl-GMP + diphosphate + H(+). In terms of biological role, nucleoside triphosphate pyrophosphatase that hydrolyzes 7-methyl-GTP (m(7)GTP). May have a dual role in cell division arrest and in preventing the incorporation of modified nucleotides into cellular nucleic acids. The sequence is that of 7-methyl-GTP pyrophosphatase from Neisseria gonorrhoeae (strain ATCC 700825 / FA 1090).